Consider the following 266-residue polypeptide: uncharacterized protein (266 aa).

Residues 1–22 (MRYLKKLAWFISVIILGIFIIG) form the signal peptide. C23 carries the N-palmitoyl cysteine lipid modification. C23 carries the S-diacylglycerol cysteine lipid modification.

It belongs to the staphylococcal tandem lipoprotein family.

It localises to the cell membrane. This is an uncharacterized protein from Staphylococcus aureus (strain USA300).